The chain runs to 194 residues: ATP-dependent Clp protease proteolytic subunit (194 aa).

Serine 97 functions as the Nucleophile in the catalytic mechanism. Residue histidine 122 is part of the active site.

This sequence belongs to the peptidase S14 family. Fourteen ClpP subunits assemble into 2 heptameric rings which stack back to back to give a disk-like structure with a central cavity, resembling the structure of eukaryotic proteasomes.

It is found in the cytoplasm. It catalyses the reaction Hydrolysis of proteins to small peptides in the presence of ATP and magnesium. alpha-casein is the usual test substrate. In the absence of ATP, only oligopeptides shorter than five residues are hydrolyzed (such as succinyl-Leu-Tyr-|-NHMec, and Leu-Tyr-Leu-|-Tyr-Trp, in which cleavage of the -Tyr-|-Leu- and -Tyr-|-Trp bonds also occurs).. Functionally, cleaves peptides in various proteins in a process that requires ATP hydrolysis. Has a chymotrypsin-like activity. Plays a major role in the degradation of misfolded proteins. The sequence is that of ATP-dependent Clp protease proteolytic subunit from Carsonella ruddii (strain PV).